Consider the following 50-residue polypeptide: Large ribosomal subunit protein bL33B (50 aa).

It belongs to the bacterial ribosomal protein bL33 family.

This chain is Large ribosomal subunit protein bL33B (rpmG2), found in Enterococcus faecalis (strain ATCC 700802 / V583).